The sequence spans 505 residues: Glutamate--tRNA ligase (505 aa).

Residues 12-22 (PSPTGDPHVGT) carry the 'HIGH' region motif. The 'KMSKS' region motif lies at 253 to 257 (KLSKR). Lysine 256 contributes to the ATP binding site.

It belongs to the class-I aminoacyl-tRNA synthetase family. Glutamate--tRNA ligase type 1 subfamily. As to quaternary structure, monomer.

The protein localises to the cytoplasm. The enzyme catalyses tRNA(Glu) + L-glutamate + ATP = L-glutamyl-tRNA(Glu) + AMP + diphosphate. Its function is as follows. Catalyzes the attachment of glutamate to tRNA(Glu) in a two-step reaction: glutamate is first activated by ATP to form Glu-AMP and then transferred to the acceptor end of tRNA(Glu). The polypeptide is Glutamate--tRNA ligase (Chlamydia felis (strain Fe/C-56) (Chlamydophila felis)).